A 92-amino-acid polypeptide reads, in one-letter code: Cell division protein FtsB (92 aa).

At M1–F3 the chain is on the cytoplasmic side. Residues F4–F21 form a helical membrane-spanning segment. The Periplasmic portion of the chain corresponds to G22–Q92. Residues L40–N73 adopt a coiled-coil conformation.

The protein belongs to the FtsB family. As to quaternary structure, part of a complex composed of FtsB, FtsL and FtsQ.

Its subcellular location is the cell inner membrane. Functionally, essential cell division protein. May link together the upstream cell division proteins, which are predominantly cytoplasmic, with the downstream cell division proteins, which are predominantly periplasmic. The polypeptide is Cell division protein FtsB (Pseudoalteromonas translucida (strain TAC 125)).